Here is a 508-residue protein sequence, read N- to C-terminus: Cobyric acid synthase (508 aa).

Residues 255-454 (ELNIAVLKLP…LHGVFESGPW (200 aa)) enclose the GATase cobBQ-type domain. Cys336 functions as the Nucleophile in the catalytic mechanism. The active site involves His446.

Belongs to the CobB/CobQ family. CobQ subfamily.

The protein operates within cofactor biosynthesis; adenosylcobalamin biosynthesis. In terms of biological role, catalyzes amidations at positions B, D, E, and G on adenosylcobyrinic A,C-diamide. NH(2) groups are provided by glutamine, and one molecule of ATP is hydrogenolyzed for each amidation. The chain is Cobyric acid synthase from Synechococcus sp. (strain CC9311).